A 1133-amino-acid polypeptide reads, in one-letter code: Lon protease homolog, mitochondrial (1133 aa).

A mitochondrion-targeting transit peptide spans 1–37 (MLRTRTTKTLSTVARTTRAIQYYRSIAKTAAVSQRRF). Residues 38–98 (ASTLTVRDVE…ATNSGKSILA (61 aa)) constitute a propeptide, removed in mature form; by autocatalysis. Composition is skewed to basic and acidic residues over residues 98-117 (AKDD…VPDE) and 125-143 (EPTR…EASK). Disordered stretches follow at residues 98 to 176 (AKDD…KDVP) and 282 to 358 (ELFP…LDDI). A compositionally biased stretch (low complexity) spans 145–166 (SRSSASGGGQSSSSRSDSGDGS). Residues 182 to 480 (MLALPIARRP…KSLLVLKKEL (299 aa)) enclose the Lon N-terminal domain. Basic and acidic residues-rich tracts occupy residues 282–301 (ELFP…KDTD) and 325–340 (KLED…SELQ). Residues 348–358 (TEEESEELDDI) show a composition bias toward acidic residues. Residue 632–639 (GPPGVGKT) participates in ATP binding. The segment at 839 to 892 (KKLSIEDSPTSSADSKPKESVSSEEKAENNAKSSSEKTKDNNSEKTSDDIEALK) is dispensable for catalytic activity. The tract at residues 844-889 (EDSPTSSADSKPKESVSSEEKAENNAKSSSEKTKDNNSEKTSDDIE) is disordered. Over residues 853–889 (SKPKESVSSEEKAENNAKSSSEKTKDNNSEKTSDDIE) the composition is skewed to basic and acidic residues. The region spanning 923-1109 (TTPPGVVMGL…NDIFQKLFKD (187 aa)) is the Lon proteolytic domain. Catalysis depends on residues S1015 and K1058.

The protein belongs to the peptidase S16 family. In terms of assembly, homohexamer. Organized in a ring with a central cavity. The ATP-binding and proteolytic domains (AP-domain) form a hexameric chamber. Oligomerization is independent of its proteolytic activity and the autocatalytic maturation of its subunits.

Its subcellular location is the mitochondrion matrix. The catalysed reaction is Hydrolysis of proteins in presence of ATP.. Functionally, ATP-dependent serine protease that mediates the selective degradation of misfolded, unassembled or oxidatively damaged polypeptides as well as certain short-lived regulatory proteins in the mitochondrial matrix. May also have a chaperone function in the assembly of inner membrane protein complexes. Participates in the regulation of mitochondrial gene expression and in the maintenance of the integrity of the mitochondrial genome. Binds to mitochondrial DNA in a site-specific manner. Endogenous substrates include ABF2, ACO2, ILV1, ILV2, LSC1, LYS4, MGM101 and several oxidized proteins. The 2 nucleic acid-binding proteins ABF2 and MGM101 are protected from degradation by PIM1 when they are bound to DNA. This is Lon protease homolog, mitochondrial from Saccharomyces cerevisiae (strain ATCC 204508 / S288c) (Baker's yeast).